We begin with the raw amino-acid sequence, 176 residues long: Large ribosomal subunit protein uL22 (176 aa).

Residues 113–176 (VVESRPSKDQ…ETSEAKGGSD (64 aa)) form a disordered region. Positions 136-152 (SKAAATAPAKKSSASKA) are enriched in low complexity. Residues 159-176 (TKAESKTSETSEAKGGSD) show a composition bias toward basic and acidic residues.

The protein belongs to the universal ribosomal protein uL22 family. Part of the 50S ribosomal subunit.

This protein binds specifically to 23S rRNA; its binding is stimulated by other ribosomal proteins, e.g. L4, L17, and L20. It is important during the early stages of 50S assembly. It makes multiple contacts with different domains of the 23S rRNA in the assembled 50S subunit and ribosome. Its function is as follows. The globular domain of the protein is located near the polypeptide exit tunnel on the outside of the subunit, while an extended beta-hairpin is found that lines the wall of the exit tunnel in the center of the 70S ribosome. This Mycobacterium marinum (strain ATCC BAA-535 / M) protein is Large ribosomal subunit protein uL22.